A 213-amino-acid polypeptide reads, in one-letter code: Imidazole glycerol phosphate synthase subunit HisH 1 (213 aa).

Residues 3-213 enclose the Glutamine amidotransferase type-1 domain; the sequence is SVSIVDYGVG…LSIIQQFLQI (211 aa). Cys81 serves as the catalytic Nucleophile. Catalysis depends on residues His195 and Glu197.

As to quaternary structure, heterodimer of HisH and HisF.

It is found in the cytoplasm. It catalyses the reaction 5-[(5-phospho-1-deoxy-D-ribulos-1-ylimino)methylamino]-1-(5-phospho-beta-D-ribosyl)imidazole-4-carboxamide + L-glutamine = D-erythro-1-(imidazol-4-yl)glycerol 3-phosphate + 5-amino-1-(5-phospho-beta-D-ribosyl)imidazole-4-carboxamide + L-glutamate + H(+). The catalysed reaction is L-glutamine + H2O = L-glutamate + NH4(+). It participates in amino-acid biosynthesis; L-histidine biosynthesis; L-histidine from 5-phospho-alpha-D-ribose 1-diphosphate: step 5/9. In terms of biological role, IGPS catalyzes the conversion of PRFAR and glutamine to IGP, AICAR and glutamate. The HisH subunit provides the glutamine amidotransferase activity that produces the ammonia necessary to HisF for the synthesis of IGP and AICAR. The chain is Imidazole glycerol phosphate synthase subunit HisH 1 from Legionella pneumophila (strain Paris).